A 196-amino-acid polypeptide reads, in one-letter code: ECF RNA polymerase sigma factor SigK (196 aa).

The sigma-70 factor domain-2 stretch occupies residues Tyr39–Gln105. The short motif at Glu62–Gln65 is the Polymerase core binding element. Residues Cys142–Lys191 are sigma-70 factor domain-4. Positions Tyr164–Arg183 form a DNA-binding region, H-T-H motif.

The protein belongs to the sigma-70 factor family. ECF subfamily. In terms of assembly, interacts transiently with the RNA polymerase catalytic core formed by RpoA, RpoB, RpoC and RpoZ (2 alpha, 1 beta, 1 beta' and 1 omega subunit) to form the RNA polymerase holoenzyme that can initiate transcription. Interacts (via sigma-70 factor domain 4) with anti-sigma-K factor RskA.

Its function is as follows. Sigma factors are initiation factors that promote the attachment of RNA polymerase to specific initiation sites and are then released. Extracytoplasmic function (ECF) sigma factors are held in an inactive form by an anti-sigma factor until released by regulated intramembrane proteolysis. The protein is ECF RNA polymerase sigma factor SigK (sigK) of Mycolicibacterium vanbaalenii (strain DSM 7251 / JCM 13017 / BCRC 16820 / KCTC 9966 / NRRL B-24157 / PYR-1) (Mycobacterium vanbaalenii).